The following is a 345-amino-acid chain: tRNA N6-adenosine threonylcarbamoyltransferase (345 aa).

His115 and His119 together coordinate Fe cation. Residues 137–141, Asp170, Gly183, Asp187, and Asn276 contribute to the substrate site; that span reads LVSGG. Asp306 contacts Fe cation.

Belongs to the KAE1 / TsaD family. Fe(2+) is required as a cofactor.

Its subcellular location is the cytoplasm. It carries out the reaction L-threonylcarbamoyladenylate + adenosine(37) in tRNA = N(6)-L-threonylcarbamoyladenosine(37) in tRNA + AMP + H(+). Required for the formation of a threonylcarbamoyl group on adenosine at position 37 (t(6)A37) in tRNAs that read codons beginning with adenine. Is involved in the transfer of the threonylcarbamoyl moiety of threonylcarbamoyl-AMP (TC-AMP) to the N6 group of A37, together with TsaE and TsaB. TsaD likely plays a direct catalytic role in this reaction. The polypeptide is tRNA N6-adenosine threonylcarbamoyltransferase (Pediococcus pentosaceus (strain ATCC 25745 / CCUG 21536 / LMG 10740 / 183-1w)).